Here is a 48-residue protein sequence, read N- to C-terminus: Large ribosomal subunit protein bL33A (48 aa).

This sequence belongs to the bacterial ribosomal protein bL33 family.

The protein is Large ribosomal subunit protein bL33A of Shouchella clausii (strain KSM-K16) (Alkalihalobacillus clausii).